The following is a 61-amino-acid chain: Double gene block protein 2 (61 aa).

Residues 1-12 are Cytoplasmic-facing; it reads MACCRCDSSPGD. A helical; Signal-anchor for type II membrane protein transmembrane segment spans residues 13 to 33; the sequence is YSGALLILFISFVFFYITSLS. The Lumenal portion of the chain corresponds to 34–61; the sequence is PQGNTYVHHFDSSSVKTQYVGISTNGDG.

It belongs to the gammacarmovirus double gene block protein 2 family.

Its subcellular location is the host endoplasmic reticulum membrane. In terms of biological role, cell-to-cell movement function. In Melon necrotic spot virus (MNSV), this protein is Double gene block protein 2.